We begin with the raw amino-acid sequence, 247 residues long: Ribosomal RNA small subunit methyltransferase J (247 aa).

Residues 106–107 (RD), 122–123 (ER), and Asp-168 contribute to the S-adenosyl-L-methionine site.

It belongs to the methyltransferase superfamily. RsmJ family.

It localises to the cytoplasm. It carries out the reaction guanosine(1516) in 16S rRNA + S-adenosyl-L-methionine = N(2)-methylguanosine(1516) in 16S rRNA + S-adenosyl-L-homocysteine + H(+). Functionally, specifically methylates the guanosine in position 1516 of 16S rRNA. The chain is Ribosomal RNA small subunit methyltransferase J from Alcanivorax borkumensis (strain ATCC 700651 / DSM 11573 / NCIMB 13689 / SK2).